The sequence spans 321 residues: N-acetyl-gamma-glutamyl-phosphate reductase (321 aa).

Cys131 is an active-site residue.

This sequence belongs to the NAGSA dehydrogenase family. Type 1 subfamily.

It is found in the cytoplasm. It catalyses the reaction N-acetyl-L-glutamate 5-semialdehyde + phosphate + NADP(+) = N-acetyl-L-glutamyl 5-phosphate + NADPH + H(+). It participates in amino-acid biosynthesis; L-arginine biosynthesis; N(2)-acetyl-L-ornithine from L-glutamate: step 3/4. Its function is as follows. Catalyzes the NADPH-dependent reduction of N-acetyl-5-glutamyl phosphate to yield N-acetyl-L-glutamate 5-semialdehyde. The protein is N-acetyl-gamma-glutamyl-phosphate reductase of Christiangramia forsetii (strain DSM 17595 / CGMCC 1.15422 / KT0803) (Gramella forsetii).